The sequence spans 92 residues: Small ribosomal subunit protein bS20 (92 aa).

Residues 1–23 are disordered; that stretch reads MANTPSAKKRAKQAEKRRSHNAS. Over residues 7 to 20 the composition is skewed to basic residues; it reads AKKRAKQAEKRRSH.

Belongs to the bacterial ribosomal protein bS20 family.

Its function is as follows. Binds directly to 16S ribosomal RNA. The protein is Small ribosomal subunit protein bS20 of Pseudomonas fluorescens (strain SBW25).